The sequence spans 137 residues: Regulator of cell cycle RGCC (137 aa).

2 disordered regions span residues 1–20 (MKPPAAQGSPAAAAAAAPAL) and 57–80 (LERMKRRSSASVSDSSGFSDSESA). Residues 65–80 (SASVSDSSGFSDSESA) are compositionally biased toward low complexity. Residues S67, S69, S71, S75, S91, and S97 each carry the phosphoserine modification. Position 111 is a phosphothreonine; by CDK1 (T111).

As to quaternary structure, interacts with SMAD3. Interacts with CDK1 and PLK1. Detected in brain, heart and liver (at protein level). Highly expressed in liver, skeletal muscle, kidney and pancreas. Detected at lower levels in heart, brain and placenta. Detected in aorta endothelial cells. Overexpressed in colon, breast, prostate, bladder, lung, and ovarian cancer tissues.

The protein localises to the cytoplasm. It is found in the nucleus. The protein resides in the cytoskeleton. Its subcellular location is the microtubule organizing center. It localises to the centrosome. Modulates the activity of cell cycle-specific kinases. Enhances CDK1 activity. May contribute to the regulation of the cell cycle. May inhibit growth of glioma cells by promoting arrest of mitotic progression at the G2/M transition. Fibrogenic factor contributing to the pathogenesis of renal fibrosis through fibroblast activation. The sequence is that of Regulator of cell cycle RGCC (RGCC) from Homo sapiens (Human).